Here is a 548-residue protein sequence, read N- to C-terminus: CTP synthase (548 aa).

Positions 1–276 (MPTELTDYDP…DQYVMEQLGL (276 aa)) are amidoligase domain. Ser25 is a CTP binding site. Ser25 contacts UTP. 26–31 (GLGKGI) is an ATP binding site. Tyr66 lines the L-glutamine pocket. ATP is bound at residue Asp83. Residues Asp83 and Glu151 each contribute to the Mg(2+) site. CTP contacts are provided by residues 158–160 (DIE), 197–202 (KTKPTQ), and Lys233. UTP contacts are provided by residues 197–202 (KTKPTQ) and Lys233. Positions 303 to 541 (DIALVGKYAM…VETILETTDT (239 aa)) constitute a Glutamine amidotransferase type-1 domain. Gly363 contacts L-glutamine. Cys390 functions as the Nucleophile; for glutamine hydrolysis in the catalytic mechanism. L-glutamine-binding positions include 391–394 (LGFQ), Glu414, and Arg471. Residues His514 and Glu516 contribute to the active site.

The protein belongs to the CTP synthase family. As to quaternary structure, homotetramer.

It catalyses the reaction UTP + L-glutamine + ATP + H2O = CTP + L-glutamate + ADP + phosphate + 2 H(+). The enzyme catalyses L-glutamine + H2O = L-glutamate + NH4(+). The catalysed reaction is UTP + NH4(+) + ATP = CTP + ADP + phosphate + 2 H(+). It functions in the pathway pyrimidine metabolism; CTP biosynthesis via de novo pathway; CTP from UDP: step 2/2. With respect to regulation, allosterically activated by GTP, when glutamine is the substrate; GTP has no effect on the reaction when ammonia is the substrate. The allosteric effector GTP functions by stabilizing the protein conformation that binds the tetrahedral intermediate(s) formed during glutamine hydrolysis. Inhibited by the product CTP, via allosteric rather than competitive inhibition. Functionally, catalyzes the ATP-dependent amination of UTP to CTP with either L-glutamine or ammonia as the source of nitrogen. Regulates intracellular CTP levels through interactions with the four ribonucleotide triphosphates. The polypeptide is CTP synthase (Natronomonas pharaonis (strain ATCC 35678 / DSM 2160 / CIP 103997 / JCM 8858 / NBRC 14720 / NCIMB 2260 / Gabara) (Halobacterium pharaonis)).